The chain runs to 211 residues: Probable GTP-binding protein EngB (211 aa).

An EngB-type G domain is found at 21–205 (LMATIVFVGR…KNRIYEIIRE (185 aa)). Residues 29–36 (GRSNVGKS), 54–58 (GVTRK), 71–74 (DMPG), 151–154 (NKLD), and 184–186 (ISA) each bind GTP. Ser-36 and Thr-56 together coordinate Mg(2+).

The protein belongs to the TRAFAC class TrmE-Era-EngA-EngB-Septin-like GTPase superfamily. EngB GTPase family. Mg(2+) is required as a cofactor.

Necessary for normal cell division and for the maintenance of normal septation. The polypeptide is Probable GTP-binding protein EngB (Pyrococcus abyssi (strain GE5 / Orsay)).